We begin with the raw amino-acid sequence, 339 residues long: Cathepsin B (339 aa).

The N-terminal stretch at 1-17 (MWWSLIPLSCLLALTSA) is a signal peptide. Positions 18-79 (HDKPSSHPLS…ERVGFSEDIN (62 aa)) are cleaved as a propeptide — activation peptide. Disulfide bonds link C93/C122, C105/C150, C141/C207, C142/C146, C179/C211, and C187/C198. The active site involves C108. N-linked (GlcNAc...) asparagine glycosylation is present at N192. K220 carries the N6-acetyllysine modification. Catalysis depends on residues H278 and N298. The propeptide occupies 334-339 (QYWGRF).

The protein belongs to the peptidase C1 family. In terms of assembly, dimer of a heavy chain and a light chain cross-linked by a disulfide bond. Interacts with SRPX2. Directly interacts with SHKBP1. Expressed in the epithelial cells of the prostate and mammary gland.

It is found in the lysosome. Its subcellular location is the melanosome. The protein localises to the secreted. It localises to the extracellular space. The protein resides in the apical cell membrane. The enzyme catalyses Hydrolysis of proteins with broad specificity for peptide bonds. Preferentially cleaves -Arg-Arg-|-Xaa bonds in small molecule substrates (thus differing from cathepsin L). In addition to being an endopeptidase, shows peptidyl-dipeptidase activity, liberating C-terminal dipeptides.. Thiol protease which is believed to participate in intracellular degradation and turnover of proteins. Cleaves matrix extracellular phosphoglycoprotein MEPE. Involved in the solubilization of cross-linked TG/thyroglobulin in the thyroid follicle lumen. Has also been implicated in tumor invasion and metastasis. This is Cathepsin B (Ctsb) from Rattus norvegicus (Rat).